Consider the following 105-residue polypeptide: N(4)-acetylcytidine amidohydrolase (105 aa).

An ASCH domain is found at 7–93; sequence TFFERFEHDI…VIAEIYPGLE (87 aa). Lys21 functions as the Proton acceptor in the catalytic mechanism. Thr24 serves as the catalytic Nucleophile. The active-site Proton donor is Glu74.

It belongs to the N(4)-acetylcytidine amidohydrolase family.

It carries out the reaction N(4)-acetylcytidine + H2O = cytidine + acetate + H(+). It catalyses the reaction N(4)-acetyl-2'-deoxycytidine + H2O = 2'-deoxycytidine + acetate + H(+). The enzyme catalyses N(4)-acetylcytosine + H2O = cytosine + acetate + H(+). Catalyzes the hydrolysis of N(4)-acetylcytidine (ac4C). The polypeptide is N(4)-acetylcytidine amidohydrolase (Shewanella baltica (strain OS195)).